The primary structure comprises 116 residues: Large ribosomal subunit protein bL17 (116 aa).

Belongs to the bacterial ribosomal protein bL17 family. As to quaternary structure, part of the 50S ribosomal subunit. Contacts protein L32.

The chain is Large ribosomal subunit protein bL17 from Prochlorococcus marinus (strain NATL2A).